Here is a 193-residue protein sequence, read N- to C-terminus: tRNA (cytidine(56)-2'-O)-methyltransferase (193 aa).

S-adenosyl-L-methionine contacts are provided by residues Leu-86 and 115 to 119 (GGEKV).

The protein belongs to the aTrm56 family. As to quaternary structure, homodimer.

Its subcellular location is the cytoplasm. The enzyme catalyses cytidine(56) in tRNA + S-adenosyl-L-methionine = 2'-O-methylcytidine(56) in tRNA + S-adenosyl-L-homocysteine + H(+). Specifically catalyzes the AdoMet-dependent 2'-O-ribose methylation of cytidine at position 56 in tRNAs. The polypeptide is tRNA (cytidine(56)-2'-O)-methyltransferase (Haloquadratum walsbyi (strain DSM 16790 / HBSQ001)).